A 101-amino-acid chain; its full sequence is Large ribosomal subunit protein uL24 (101 aa).

Belongs to the universal ribosomal protein uL24 family. Part of the 50S ribosomal subunit.

In terms of biological role, one of two assembly initiator proteins, it binds directly to the 5'-end of the 23S rRNA, where it nucleates assembly of the 50S subunit. One of the proteins that surrounds the polypeptide exit tunnel on the outside of the subunit. The chain is Large ribosomal subunit protein uL24 from Clostridioides difficile (strain 630) (Peptoclostridium difficile).